We begin with the raw amino-acid sequence, 195 residues long: MTPTLLSAFWTYTLITAMTPRPNNILALSSATSHGFRQSTRVLAGMSLGFLIVMLLCAGISFSLAVIDPAAVHLLSWAGAAYIVWLAWKIATSPTKEDGLQAKPISFWASFALQFVNVKIILYGVTALSTFVLPQTQALSWVVGVSVLLAMIGTFGNVCWALAGHLFQRLFRQYGRQLNIVLALLLVYCAVRIFY.

5 helical membrane-spanning segments follow: residues 47-67 (SLGFLIVMLLCAGISFSLAVI), 70-90 (AAVHLLSWAGAAYIVWLAWKI), 105-125 (ISFWASFALQFVNVKIILYGV), 142-162 (VVGVSVLLAMIGTFGNVCWAL), and 177-194 (QLNIVLALLLVYCAVRIF).

Belongs to the Rht family.

It localises to the cell inner membrane. The enzyme catalyses O-acetyl-L-serine(in) = O-acetyl-L-serine(out). The catalysed reaction is L-cysteine(in) = L-cysteine(out). Functionally, exporter of O-acetylserine (OAS) and cysteine. This is Cysteine/O-acetylserine efflux protein (eamB) from Shigella boydii serotype 4 (strain Sb227).